Consider the following 803-residue polypeptide: Elongation factor G, mitochondrial (803 aa).

The transit peptide at 1–24 (MVRPAQVRAFSGLARSATSTRLIP) directs the protein to the mitochondrion. Positions 102-388 (SKVRNIGIAA…GVCDYLPNPS (287 aa)) constitute a tr-type G domain. GTP contacts are provided by residues 111–118 (AHIDSGKT), 186–190 (DTPGH), and 240–243 (NKMD).

The protein belongs to the TRAFAC class translation factor GTPase superfamily. Classic translation factor GTPase family. EF-G/EF-2 subfamily.

The protein resides in the mitochondrion. The protein operates within protein biosynthesis; polypeptide chain elongation. Mitochondrial GTPase that catalyzes the GTP-dependent ribosomal translocation step during translation elongation. During this step, the ribosome changes from the pre-translocational (PRE) to the post-translocational (POST) state as the newly formed A-site-bound peptidyl-tRNA and P-site-bound deacylated tRNA move to the P and E sites, respectively. Catalyzes the coordinated movement of the two tRNA molecules, the mRNA and conformational changes in the ribosome. The polypeptide is Elongation factor G, mitochondrial (mef1) (Talaromyces marneffei (strain ATCC 18224 / CBS 334.59 / QM 7333) (Penicillium marneffei)).